A 321-amino-acid polypeptide reads, in one-letter code: Glucokinase (321 aa).

8–13 contributes to the ATP binding site; the sequence is GDVGGT.

It belongs to the bacterial glucokinase family.

The protein resides in the cytoplasm. It carries out the reaction D-glucose + ATP = D-glucose 6-phosphate + ADP + H(+). The protein is Glucokinase of Shigella dysenteriae serotype 1 (strain Sd197).